A 163-amino-acid chain; its full sequence is 2-C-methyl-D-erythritol 2,4-cyclodiphosphate synthase (163 aa).

Residues aspartate 11 and histidine 13 each contribute to the a divalent metal cation site. Residues 11–13 (DIH) and 37–38 (HS) contribute to the 4-CDP-2-C-methyl-D-erythritol 2-phosphate site. Histidine 45 lines the a divalent metal cation pocket. 4-CDP-2-C-methyl-D-erythritol 2-phosphate contacts are provided by residues 59–61 (DIG), 64–68 (FSDTD), 103–109 (AQVPKMA), and arginine 145.

It belongs to the IspF family. Homotrimer. A divalent metal cation is required as a cofactor.

The catalysed reaction is 4-CDP-2-C-methyl-D-erythritol 2-phosphate = 2-C-methyl-D-erythritol 2,4-cyclic diphosphate + CMP. It participates in isoprenoid biosynthesis; isopentenyl diphosphate biosynthesis via DXP pathway; isopentenyl diphosphate from 1-deoxy-D-xylulose 5-phosphate: step 4/6. Its function is as follows. Involved in the biosynthesis of isopentenyl diphosphate (IPP) and dimethylallyl diphosphate (DMAPP), two major building blocks of isoprenoid compounds. Catalyzes the conversion of 4-diphosphocytidyl-2-C-methyl-D-erythritol 2-phosphate (CDP-ME2P) to 2-C-methyl-D-erythritol 2,4-cyclodiphosphate (ME-CPP) with a corresponding release of cytidine 5-monophosphate (CMP). This Nitrosomonas europaea (strain ATCC 19718 / CIP 103999 / KCTC 2705 / NBRC 14298) protein is 2-C-methyl-D-erythritol 2,4-cyclodiphosphate synthase.